The primary structure comprises 271 residues: MKRPNNRPTNTMSLILCLTLSSLCVSSQSASVHGKNFATNRAVKSSSPFVVLSPDDNVVSMSGENGYRSALREAFDKSSRDYDDNGEDVFSNEKRRLRFHKRRLRFDRRDQDEGNFRRFPTNAVSMSADENSPFDLSNEDGAVYQRDLRAPRLRFYSLRKRAAGGMEQSEGQNPETESHSRRKRSVLTPSLSSLGESLESGISKRISINQDLKAITDMLLTEQIRERQRYLADLRQRLLEKGKRSSGVSLLTSNKDEEQRELLKAISNLLD.

The first 28 residues, 1-28 (MKRPNNRPTNTMSLILCLTLSSLCVSSQ), serve as a signal peptide directing secretion. Propeptides lie at residues 29 to 95 (SASV…NEKR) and 162 to 184 (AAGGMEQSEGQNPETESHSRRKR). Positions 162-190 (AAGGMEQSEGQNPETESHSRRKRSVLTPS) are disordered. The residue at position 241 (K241) is a Lysine amide.

This sequence belongs to the molluscan ELH family. As to expression, bag cell neurons.

It localises to the secreted. In terms of biological role, ELH acts as a neurotransmitter locally, upon neurons of the abdominal ganglion and as a hormone by diffusing into the circulating hemolymph and modulating the activity of other organs. It specifically causes contraction of smooth muscle in the ovotestis and expulsion of the egg string. Its function is as follows. Alpha-BCP decreases the activity of a cluster of neurons in the left upper quadrant of the abdominal ganglion. Beta-BCP specifically excites 2 neurons, L1 and R1, in the abdominal ganglion. In Aplysia californica (California sea hare), this protein is ELH.